The chain runs to 168 residues: Crossover junction endodeoxyribonuclease RuvC (168 aa).

Active-site residues include aspartate 10, glutamate 70, and aspartate 143. The Mg(2+) site is built by aspartate 10, glutamate 70, and aspartate 143.

Belongs to the RuvC family. Homodimer which binds Holliday junction (HJ) DNA. The HJ becomes 2-fold symmetrical on binding to RuvC with unstacked arms; it has a different conformation from HJ DNA in complex with RuvA. In the full resolvosome a probable DNA-RuvA(4)-RuvB(12)-RuvC(2) complex forms which resolves the HJ. Requires Mg(2+) as cofactor.

The protein resides in the cytoplasm. The catalysed reaction is Endonucleolytic cleavage at a junction such as a reciprocal single-stranded crossover between two homologous DNA duplexes (Holliday junction).. The RuvA-RuvB-RuvC complex processes Holliday junction (HJ) DNA during genetic recombination and DNA repair. Endonuclease that resolves HJ intermediates. Cleaves cruciform DNA by making single-stranded nicks across the HJ at symmetrical positions within the homologous arms, yielding a 5'-phosphate and a 3'-hydroxyl group; requires a central core of homology in the junction. The consensus cleavage sequence is 5'-(A/T)TT(C/G)-3'. Cleavage occurs on the 3'-side of the TT dinucleotide at the point of strand exchange. HJ branch migration catalyzed by RuvA-RuvB allows RuvC to scan DNA until it finds its consensus sequence, where it cleaves and resolves the cruciform DNA. This Roseiflexus sp. (strain RS-1) protein is Crossover junction endodeoxyribonuclease RuvC.